Reading from the N-terminus, the 46-residue chain is LCVAHGITREKIEENGSMRENIIDVTKTNRVFMQHIDVLENSLGFK.

Asn15 carries an N-linked (GlcNAc...) asparagine glycan.

This sequence belongs to the calycin superfamily. Lipocalin family. Found in many tissues including liver, urine, preputial gland, clitoral gland, submandibular gland and salivary gland.

The protein resides in the secreted. Binds pheromones that are released from drying urine of males. These pheromones affect the sexual behavior of females. Acts as a shuttle for pheromonal communication between individuals of the same species. The protein is Major urinary protein of Rattus rattus (Black rat).